Consider the following 468-residue polypeptide: ATP synthase subunit beta (468 aa).

An ATP-binding site is contributed by 155 to 162 (GGAGVGKT).

It belongs to the ATPase alpha/beta chains family. In terms of assembly, F-type ATPases have 2 components, CF(1) - the catalytic core - and CF(0) - the membrane proton channel. CF(1) has five subunits: alpha(3), beta(3), gamma(1), delta(1), epsilon(1). CF(0) has three main subunits: a(1), b(2) and c(9-12). The alpha and beta chains form an alternating ring which encloses part of the gamma chain. CF(1) is attached to CF(0) by a central stalk formed by the gamma and epsilon chains, while a peripheral stalk is formed by the delta and b chains.

The protein resides in the cell membrane. The enzyme catalyses ATP + H2O + 4 H(+)(in) = ADP + phosphate + 5 H(+)(out). Functionally, produces ATP from ADP in the presence of a proton gradient across the membrane. The catalytic sites are hosted primarily by the beta subunits. The polypeptide is ATP synthase subunit beta (Streptococcus pneumoniae serotype 19F (strain G54)).